A 154-amino-acid chain; its full sequence is Myoglobin (154 aa).

The Globin domain maps to 2-148; it reads GLSDQEWQQV…FRNDMASKYK (147 aa). His65 is a binding site for nitrite. An O2-binding site is contributed by His65. Heme b is bound at residue His94.

It belongs to the globin family. In terms of assembly, monomeric.

The protein resides in the cytoplasm. The protein localises to the sarcoplasm. The enzyme catalyses Fe(III)-heme b-[protein] + nitric oxide + H2O = Fe(II)-heme b-[protein] + nitrite + 2 H(+). It carries out the reaction H2O2 + AH2 = A + 2 H2O. Its function is as follows. Monomeric heme protein which primary function is to store oxygen and facilitate its diffusion within muscle tissues. Reversibly binds oxygen through a pentacoordinated heme iron and enables its timely and efficient release as needed during periods of heightened demand. Depending on the oxidative conditions of tissues and cells, and in addition to its ability to bind oxygen, it also has a nitrite reductase activity whereby it regulates the production of bioactive nitric oxide. Under stress conditions, like hypoxia and anoxia, it also protects cells against reactive oxygen species thanks to its pseudoperoxidase activity. The chain is Myoglobin (MB) from Aethia pygmaea (Whiskered auklet).